A 699-amino-acid chain; its full sequence is MRLLLLLILIITINFSYGVLTPKNLAGEASEFGSFNIPNPMDVAQSSDSSLFGISMTQSQLKNSFEWSGVVPVDSEEEFTLTFFSSFPLSEFKVEASPKTSLSSSKSESEHKSKFYKVIKSIYQTPTVTNGSFGIDGATTPSFSLTWDKPVVGDWNVVITASSSLRKNEKFQKMVEDSTPQLLMLVQNPSDTHIYSYVSSYNNLFTGQKVSVLAMLHKKSEFIKKSSANRPLNWKPSPILLSDVSAEMILGLPDGSKETIPMFDDGLHDDEQANDGLFGGYINVSELGNYDLQVVYKGSQNGNGVIRSNQHLIPITSQYLELTGEVQSVQDGDANLNIYFIVNSPNQTTVDQTPVHVYSEVYGTDDDGKKVAIAWVAGVTSAQPIQGSTTTFALSAVLNERWIAKVGATAPFFVKNVQVSDLDTFIPLSNTTSTSNVKMVGEYKDVRTIVHSPPLHEITKEMRDGKMPKELADRIGKSTGNGKLILTHGYCSEGVWPIEDFENSVEFQDFNQNRGNDEFAQILANFGSQYTDGFSLVAHSQGGNAALHLVTFYFSGLDLSQKLEGRVIQSMGTPYQGTALAGTWASIGSAVGVGCSANDDLTVDGAALWLKSIPADKRALVYYTTTQYSTGSLINYCNLASNAVLEWPNDGVVDNEHTPLEGGVYLNNFKDWCHSDGMHSPQQTTNTEYNKEMSSNSVW.

The first 18 residues, 1 to 18 (MRLLLLLILIITINFSYG), serve as a signal peptide directing secretion. 4 N-linked (GlcNAc...) asparagine glycosylation sites follow: asparagine 130, asparagine 283, asparagine 346, and asparagine 430. A disordered region spans residues 680-699 (SPQQTTNTEYNKEMSSNSVW).

In terms of processing, N- and O-glycosylated. The N-terminus is blocked.

Involved in cell density sensing and might synchronize the onset of development by triggering aggregation when a majority of the cells in a given area have starved. In Dictyostelium discoideum (Social amoeba), this protein is Conditioned medium factor (cmfA).